A 56-amino-acid polypeptide reads, in one-letter code: Alpha-conotoxin TxIA (56 aa).

The N-terminal stretch at 1–16 is a signal peptide; that stretch reads MFTVFLLVVLATAVVS. Residues 17 to 39 constitute a propeptide that is removed on maturation; it reads FTSDRASDDGKAAASDLITLTIK. 2 cysteine pairs are disulfide-bonded: Cys41-Cys47 and Cys42-Cys55. The tract at residues 43–45 is ser-Xaa-Pro motif, crucial for potent interaction with nAChR; it reads SRP. 4-hydroxyproline; partial is present on residues Pro45 and Pro46. Residue Cys55 is modified to Cysteine amide.

The protein belongs to the conotoxin A superfamily. Exists in 4 different forms, depending on hydroxylations. Tx1a-PP does not contain hydroxyproline, tx1a-OP has one hydroxyproline at position 45, tx1a-PO has one hydroxyproline at position 46, and tx1a-PP has two hydroxyprolines at positions 45 and 46. In terms of tissue distribution, expressed by the venom duct. Tx1a that containing 1 or 2 non-hydroxylated prolines are mostly present in part 5 of the venom duct (distal part near the pharynx), whereas tx1a-OO (with 2 hydroxyprolines) is mostly present in part 4 of the venom duct (follewed by part 3).

Its subcellular location is the secreted. Its function is as follows. Alpha-conotoxins act on postsynaptic membranes, they bind to the nicotinic acetylcholine receptors (nAChR) and thus inhibit them. This toxin inhibits rat alpha-3-beta-2/CHRNA3-CHRNB2 (IC(50)=3.5 nM), rat alpha-7/CHRNA7 (IC(50)=392 nM) nAChR, and the L.stagnalis soluble acetylcholine receptor (all tested without hydroxyproline). The chain is Alpha-conotoxin TxIA from Conus textile (Cloth-of-gold cone).